The chain runs to 458 residues: Phosphoglucosamine mutase (458 aa).

Serine 106 serves as the catalytic Phosphoserine intermediate. Residues serine 106, aspartate 247, aspartate 249, and aspartate 251 each contribute to the Mg(2+) site. Serine 106 is subject to Phosphoserine.

This sequence belongs to the phosphohexose mutase family. Mg(2+) is required as a cofactor. Post-translationally, activated by phosphorylation.

It carries out the reaction alpha-D-glucosamine 1-phosphate = D-glucosamine 6-phosphate. Catalyzes the conversion of glucosamine-6-phosphate to glucosamine-1-phosphate. The polypeptide is Phosphoglucosamine mutase (Chlamydia trachomatis serovar L2 (strain ATCC VR-902B / DSM 19102 / 434/Bu)).